We begin with the raw amino-acid sequence, 259 residues long: Deoxyribose-phosphate aldolase (259 aa).

Asp-102 functions as the Proton donor/acceptor in the catalytic mechanism. Residue Lys-167 is the Schiff-base intermediate with acetaldehyde of the active site. Lys-201 (proton donor/acceptor) is an active-site residue.

The protein belongs to the DeoC/FbaB aldolase family. DeoC type 2 subfamily.

It localises to the cytoplasm. The enzyme catalyses 2-deoxy-D-ribose 5-phosphate = D-glyceraldehyde 3-phosphate + acetaldehyde. Its pathway is carbohydrate degradation; 2-deoxy-D-ribose 1-phosphate degradation; D-glyceraldehyde 3-phosphate and acetaldehyde from 2-deoxy-alpha-D-ribose 1-phosphate: step 2/2. Its function is as follows. Catalyzes a reversible aldol reaction between acetaldehyde and D-glyceraldehyde 3-phosphate to generate 2-deoxy-D-ribose 5-phosphate. This Escherichia coli O45:K1 (strain S88 / ExPEC) protein is Deoxyribose-phosphate aldolase.